The sequence spans 193 residues: MNNLEAILRLKTIDAAKKLLGHFLVSKYNNKILIGKIVETEAYLYNDPACHSYSNRTKRNSMMYAQAGTSYVYFTYGMHYCFNVVTADVGIGEAILIRALEPIAGIEQMQLNRSKTKLIDLCSGPAKLTQALNINLKDNGINLLDKDSSILLRYNNDLINEIDIVQTQRIGISKAKDMPYRFYIKDNIFVSKK.

It belongs to the DNA glycosylase MPG family.

This Francisella tularensis subsp. holarctica (strain FTNF002-00 / FTA) protein is Putative 3-methyladenine DNA glycosylase.